The following is a 220-amino-acid chain: Chalcone--flavanone isomerase B (220 aa).

Substrate contacts are provided by threonine 50, asparagine 115, and threonine 192.

It belongs to the chalcone isomerase family.

It catalyses the reaction a chalcone = a flavanone.. It functions in the pathway secondary metabolite biosynthesis; flavonoid biosynthesis. In terms of biological role, catalyzes the intramolecular cyclization of bicyclic chalcones into tricyclic (S)-flavanones. Responsible for the isomerization of 4,2',4',6'-tetrahydroxychalcone (also termed chalcone) into naringenin. The sequence is that of Chalcone--flavanone isomerase B (CHI2) from Petunia hybrida (Petunia).